A 386-amino-acid chain; its full sequence is Leupaxin (386 aa).

Met1 carries the post-translational modification N-acetylmethionine. Positions 3–15 (ELDALLEELERCT) match the LD motif 1 motif. Ser19 bears the Phosphoserine mark. The segment at 19–52 (SEEYSNPVSCHLDQQSTEESKIPQTPKTLSSQGN) is disordered. Residue Tyr22 is modified to Phosphotyrosine. The segment covering 22–52 (YSNPVSCHLDQQSTEESKIPQTPKTLSSQGN) has biased composition (polar residues). Ser54 is modified (phosphoserine). Position 62 is a phosphotyrosine (Tyr62). 2 consecutive short sequence motifs (LD motif) follow at residues 70-82 (NVYSEVQEPKESV) and 92-103 (QLDELMAHLSEM). Phosphotyrosine; by LYN is present on Tyr72. Ser81 is subject to Phosphoserine. LIM zinc-binding domains follow at residues 150–208 (GYCA…RLFS), 209–267 (PRCA…AMFS), 268–326 (PKCG…HRRG), and 327–386 (TLCH…LFSQ).

It belongs to the paxillin family. Interacts with unphosphorylated ITGA4. Interacts with AR and SRF. Interacts with PTK2B/PYK2, PTPN22 and PTPN12. Interacts (via LD motif 3) with LYN and the interaction is induced upon B-cell antigen receptor (BCR) activation. Interacts (via LD motif 3) with PTK2/FAK. Post-translationally, phosphorylated on tyrosine residues. Phosphorylation on Tyr-72 is important for its inhibitory function. Bombesin stimulates phosphorylation on Tyr-22, Tyr-62 and Tyr-72. Expressed in osteoclasts (at protein level). Highly expressed in vascular smooth muscle.

It is found in the cytoplasm. The protein localises to the cell junction. Its subcellular location is the focal adhesion. It localises to the nucleus. The protein resides in the perinuclear region. It is found in the cell projection. The protein localises to the podosome. Its subcellular location is the cell membrane. In terms of biological role, transcriptional coactivator for androgen receptor (AR) and serum response factor (SRF). Contributes to the regulation of cell adhesion, spreading and cell migration and acts as a negative regulator in integrin-mediated cell adhesion events. Suppresses the integrin-induced tyrosine phosphorylation of paxillin (PXN). May play a critical role as an adapter protein in the formation of the adhesion zone in osteoclasts. Negatively regulates B-cell antigen receptor (BCR) signaling. This Mus musculus (Mouse) protein is Leupaxin (Lpxn).